The following is a 534-amino-acid chain: Calcium-dependent protein kinase 29 (534 aa).

A disordered region spans residues 1–72 (MGFCFSKFGK…STSSGSQIGP (72 aa)). A lipid anchor (N-myristoyl glycine) is attached at Gly-2. Residues 16–27 (IPISSSSDSSPP) show a composition bias toward low complexity. The span at 49–63 (NPQPKPKPAPPPPPS) shows a compositional bias: pro residues. The Protein kinase domain maps to 85–343 (YDLHKELGRG…AAEALEHPWM (259 aa)). Residues 91 to 99 (LGRGQFGIT) and Lys-114 each bind ATP. Catalysis depends on Asp-209, which acts as the Proton acceptor. Ser-249 is modified (phosphoserine). An autoinhibitory domain region spans residues 348–378 (ISDKPINSAVLVRMKQFRAMNKLKKLALKVI). EF-hand domains are found at residues 385–420 (EEIK…LGSK), 421–456 (LTES…RHRL), 457–492 (EKEE…YGMG), and 493–527 (DDAT…GTTD). Residues Asp-398, Asp-400, Ser-402, Thr-404, Glu-409, Asp-434, Asp-436, Ser-438, Thr-440, Glu-445, Asp-470, Asp-472, Ser-474, Glu-481, Asp-505, Asp-507, Asp-509, Arg-511, and Glu-516 each contribute to the Ca(2+) site.

The protein belongs to the protein kinase superfamily. Ser/Thr protein kinase family. CDPK subfamily.

It is found in the membrane. It catalyses the reaction L-seryl-[protein] + ATP = O-phospho-L-seryl-[protein] + ADP + H(+). The catalysed reaction is L-threonyl-[protein] + ATP = O-phospho-L-threonyl-[protein] + ADP + H(+). Its activity is regulated as follows. Activated by calcium. Autophosphorylation may play an important role in the regulation of the kinase activity. Its function is as follows. May play a role in signal transduction pathways that involve calcium as a second messenger. This Arabidopsis thaliana (Mouse-ear cress) protein is Calcium-dependent protein kinase 29 (CPK29).